A 178-amino-acid chain; its full sequence is Caveolin-1 (178 aa).

Residue Ser2 is modified to N-acetylserine. Position 2 is a phosphoserine (Ser2). The tract at residues 2–94 (SGGKYVDSEG…WKASFTTFTV (93 aa)) is required for homooligomerization. The Cytoplasmic segment spans residues 2-104 (SGGKYVDSEG…TKYWFYRLLS (103 aa)). Lys5 carries the N6-acetyllysine; alternate modification. A Glycyl lysine isopeptide (Lys-Gly) (interchain with G-Cter in ubiquitin); alternate cross-link involves residue Lys5. Position 6 is a phosphotyrosine (Tyr6). The residue at position 9 (Ser9) is a Phosphoserine. The residue at position 14 (Tyr14) is a Phosphotyrosine; by ABL1. Tyr25 bears the Phosphotyrosine mark. Residues Lys26 and Lys30 each participate in a glycyl lysine isopeptide (Lys-Gly) (interchain with G-Cter in ubiquitin) cross-link. The residue at position 37 (Ser37) is a Phosphoserine. Residues Lys39, Lys47, and Lys57 each participate in a glycyl lysine isopeptide (Lys-Gly) (interchain with G-Cter in ubiquitin) cross-link. The interval 82–94 (DGIWKASFTTFTV) is interaction with CAVIN3. The segment at residues 105–125 (ALFGIPMALVWGIYFAILSFL) is an intramembrane region (helical). Topologically, residues 126–178 (HIWAVVPCIKSFLIEIQCISRVYSIYVHTVCDPLFEAVGKIFSNVRINLQKEI) are cytoplasmic. Residues 131 to 142 (VPCIKSFLIEIQ) are interacts with SPRY1, SPRY2, SPRY3 and SPRY4. Residues Cys133, Cys143, and Cys156 are each lipidated (S-palmitoyl cysteine). The tract at residues 149–160 (SIYVHTVCDPLF) is interacts with SPRY1, SPRY2, and SPRY4. Positions 167–178 (FSNVRINLQKEI) are interacts with SPRY1, SPRY2, SPRY3 and SPRY4.

Belongs to the caveolin family. In terms of assembly, homooligomer. Interacts with GLIPR2. Interacts with NOSTRIN. Interacts with SNAP25 and STX1A. Interacts (via the N-terminus) with DPP4; the interaction is direct. Interacts with CTNNB1, CDH1 and JUP. Interacts with PACSIN2; this interaction induces membrane tubulation. Interacts with SLC7A9. Interacts with BMX and BTK. Interacts with TGFBR1. Interacts with CAVIN3 (via leucine-zipper domain) in a cholesterol-sensitive manner. Interacts with CAVIN1. Interacts with EHD2 in a cholesterol-dependent manner. Forms a ternary complex with UBXN6 and VCP; mediates CAV1 targeting to lysosomes for degradation. Interacts with ABCG1; this interaction regulates ABCG1-mediated cholesterol efflux. Interacts with NEU3; this interaction enhances NEU3 sialidase activity within caveola. Interacts (via C-terminus) with SPRY1, SPRY2 (via C-terminus), SPRY3, and SPRY4. Interacts with IGFBP5; this interaction allows trafficking of IGFBP5 from the plasma membrane to the nucleus. Phosphorylated at Tyr-14 by ABL1 in response to oxidative stress. Post-translationally, ubiquitinated. Undergo monoubiquitination and multi- and/or polyubiquitination. Monoubiquitination of N-terminal lysines promotes integration in a ternary complex with UBXN6 and VCP which promotes oligomeric CAV1 targeting to lysosomes for degradation. Ubiquitinated by ZNRF1; leading to degradation and modulation of the TLR4-mediated immune response.

Its subcellular location is the golgi apparatus membrane. The protein resides in the cell membrane. The protein localises to the membrane. It localises to the caveola. It is found in the membrane raft. In terms of biological role, may act as a scaffolding protein within caveolar membranes. Forms a stable heterooligomeric complex with CAV2 that targets to lipid rafts and drives caveolae formation. Mediates the recruitment of CAVIN proteins (CAVIN1/2/3/4) to the caveolae. Interacts directly with G-protein alpha subunits and can functionally regulate their activity. Involved in the costimulatory signal essential for T-cell receptor (TCR)-mediated T-cell activation. Its binding to DPP4 induces T-cell proliferation and NF-kappa-B activation in a T-cell receptor/CD3-dependent manner. Recruits CTNNB1 to caveolar membranes and may regulate CTNNB1-mediated signaling through the Wnt pathway. Negatively regulates TGFB1-mediated activation of SMAD2/3 by mediating the internalization of TGFBR1 from membrane rafts leading to its subsequent degradation. Binds 20(S)-hydroxycholesterol (20(S)-OHC). In Papio anubis (Olive baboon), this protein is Caveolin-1 (CAV1).